Here is a 58-residue protein sequence, read N- to C-terminus: Photosystem II reaction center protein K (58 aa).

Positions 1–21 (MFNAYLDTVLDLSANGTVILA) are excised as a propeptide. The helical transmembrane segment at 29–49 (IFDPIVDVMPIIPVFFLLLAF) threads the bilayer.

This sequence belongs to the PsbK family. In terms of assembly, PSII is composed of 1 copy each of membrane proteins PsbA, PsbB, PsbC, PsbD, PsbE, PsbF, PsbH, PsbI, PsbJ, PsbK, PsbL, PsbM, PsbT, PsbX, PsbY, PsbZ, Psb30/Ycf12, at least 3 peripheral proteins of the oxygen-evolving complex and a large number of cofactors. It forms dimeric complexes.

It localises to the plastid. Its subcellular location is the chloroplast thylakoid membrane. Functionally, one of the components of the core complex of photosystem II (PSII). PSII is a light-driven water:plastoquinone oxidoreductase that uses light energy to abstract electrons from H(2)O, generating O(2) and a proton gradient subsequently used for ATP formation. It consists of a core antenna complex that captures photons, and an electron transfer chain that converts photonic excitation into a charge separation. The sequence is that of Photosystem II reaction center protein K from Staurastrum punctulatum (Green alga).